The primary structure comprises 338 residues: Phenylalanine--tRNA ligase alpha subunit (338 aa).

Glu252 contributes to the Mg(2+) binding site.

Belongs to the class-II aminoacyl-tRNA synthetase family. Phe-tRNA synthetase alpha subunit type 1 subfamily. Tetramer of two alpha and two beta subunits. Mg(2+) is required as a cofactor.

Its subcellular location is the cytoplasm. The enzyme catalyses tRNA(Phe) + L-phenylalanine + ATP = L-phenylalanyl-tRNA(Phe) + AMP + diphosphate + H(+). This is Phenylalanine--tRNA ligase alpha subunit from Fusobacterium nucleatum subsp. nucleatum (strain ATCC 25586 / DSM 15643 / BCRC 10681 / CIP 101130 / JCM 8532 / KCTC 2640 / LMG 13131 / VPI 4355).